We begin with the raw amino-acid sequence, 571 residues long: Chaperonin GroEL 1 (571 aa).

ATP-binding positions include threonine 29–proline 32, lysine 50, aspartate 86–threonine 90, glycine 416, and aspartate 498.

The protein belongs to the chaperonin (HSP60) family. As to quaternary structure, forms a cylinder of 14 subunits composed of two heptameric rings stacked back-to-back. Interacts with the co-chaperonin GroES.

It is found in the cytoplasm. The catalysed reaction is ATP + H2O + a folded polypeptide = ADP + phosphate + an unfolded polypeptide.. Its function is as follows. Together with its co-chaperonin GroES, plays an essential role in assisting protein folding. The GroEL-GroES system forms a nano-cage that allows encapsulation of the non-native substrate proteins and provides a physical environment optimized to promote and accelerate protein folding. The protein is Chaperonin GroEL 1 of Rhodopirellula baltica (strain DSM 10527 / NCIMB 13988 / SH1).